A 236-amino-acid chain; its full sequence is ATP phosphoribosyltransferase (236 aa).

This sequence belongs to the ATP phosphoribosyltransferase family. Short subfamily. Heteromultimer composed of HisG and HisZ subunits.

The protein resides in the cytoplasm. The catalysed reaction is 1-(5-phospho-beta-D-ribosyl)-ATP + diphosphate = 5-phospho-alpha-D-ribose 1-diphosphate + ATP. The protein operates within amino-acid biosynthesis; L-histidine biosynthesis; L-histidine from 5-phospho-alpha-D-ribose 1-diphosphate: step 1/9. Its function is as follows. Catalyzes the condensation of ATP and 5-phosphoribose 1-diphosphate to form N'-(5'-phosphoribosyl)-ATP (PR-ATP). Has a crucial role in the pathway because the rate of histidine biosynthesis seems to be controlled primarily by regulation of HisG enzymatic activity. This Cereibacter sphaeroides (strain ATCC 17023 / DSM 158 / JCM 6121 / CCUG 31486 / LMG 2827 / NBRC 12203 / NCIMB 8253 / ATH 2.4.1.) (Rhodobacter sphaeroides) protein is ATP phosphoribosyltransferase (hisG).